Reading from the N-terminus, the 369-residue chain is Aminomethyltransferase (369 aa).

The protein belongs to the GcvT family. As to quaternary structure, the glycine cleavage system is composed of four proteins: P, T, L and H.

It carries out the reaction N(6)-[(R)-S(8)-aminomethyldihydrolipoyl]-L-lysyl-[protein] + (6S)-5,6,7,8-tetrahydrofolate = N(6)-[(R)-dihydrolipoyl]-L-lysyl-[protein] + (6R)-5,10-methylene-5,6,7,8-tetrahydrofolate + NH4(+). In terms of biological role, the glycine cleavage system catalyzes the degradation of glycine. This is Aminomethyltransferase from Xanthomonas oryzae pv. oryzae (strain PXO99A).